Consider the following 251-residue polypeptide: Methionine aminopeptidase (251 aa).

Histidine 77 lines the substrate pocket. A divalent metal cation-binding residues include aspartate 94, aspartate 105, and histidine 169. Histidine 176 contacts substrate. Glutamate 202 and glutamate 233 together coordinate a divalent metal cation.

Belongs to the peptidase M24A family. Methionine aminopeptidase type 1 subfamily. As to quaternary structure, monomer. Requires Co(2+) as cofactor. It depends on Zn(2+) as a cofactor. Mn(2+) is required as a cofactor. Fe(2+) serves as cofactor.

The catalysed reaction is Release of N-terminal amino acids, preferentially methionine, from peptides and arylamides.. In terms of biological role, removes the N-terminal methionine from nascent proteins. The N-terminal methionine is often cleaved when the second residue in the primary sequence is small and uncharged (Met-Ala-, Cys, Gly, Pro, Ser, Thr, or Val). Requires deformylation of the N(alpha)-formylated initiator methionine before it can be hydrolyzed. This chain is Methionine aminopeptidase, found in Mycoplasma capricolum subsp. capricolum (strain California kid / ATCC 27343 / NCTC 10154).